Reading from the N-terminus, the 80-residue chain is Defensin-like protein 18 (80 aa).

A signal peptide spans 1-29 (MAKFCTTITLILVALVLFADFEAPTIVKA). Intrachain disulfides connect cysteine 32-cysteine 80, cysteine 43-cysteine 64, cysteine 49-cysteine 74, and cysteine 53-cysteine 76.

It belongs to the DEFL family.

Its subcellular location is the secreted. In terms of biological role, confers broad-spectrum resistance to pathogens. The protein is Defensin-like protein 18 (PDF1.5) of Arabidopsis thaliana (Mouse-ear cress).